The sequence spans 255 residues: MAELRALVAVKRVIDFAVKIRVKPDRTGVVMDGVKHSMNPFCEIAVEEAVRLKEKKLVKEVIAVSCGPAQCQETIRTALAMGADRGIHVEVPAAEAHHLGPLQVARVLAKLAQKEKVDLVLLGKQAIDDDCNQTGQMTAGFLDWPQGTFASQVTLEGDKVKVEREIDGGLETLRLKLPAVVTADLRLNEPRYATLPNIMKAKKKKIEVIKAGDLGVDLTSKLSVVSVEDPPQRVAGVKVETTEDLVAKLREIGRI.

At Ala2 the chain carries N-acetylalanine. AMP is bound by residues Ala9, Asn39 to Cys42, Cys66, and Gly123 to Thr134. Positions Ala183–Lys205 are recognition loop. Lys200 carries the N6,N6,N6-trimethyllysine; by ETFBKMT; alternate modification. Residue Lys200 is modified to N6-acetyllysine; alternate. Lys200 is modified (N6-methyllysine; alternate). Lys203 carries the post-translational modification N6,N6,N6-trimethyllysine; by ETFBKMT. Lys210 bears the N6-acetyllysine; alternate mark. Lys210 is subject to N6-succinyllysine; alternate. Residues Ser223 and Ser226 each carry the phosphoserine modification. Residue Lys238 is modified to N6-acetyllysine. Lys248 carries the N6-acetyllysine; alternate modification. Lys248 carries the post-translational modification N6-succinyllysine; alternate.

This sequence belongs to the ETF beta-subunit/FixA family. Heterodimer composed of ETFA and ETFB. Identified in a complex that contains ETFA, ETFB and ETFRF1. Interacts with ACADM. Post-translationally, methylated. Trimethylation at Lys-200 and Lys-203 may negatively regulate the activity in electron transfer from acyl-CoA dehydrogenases.

The protein localises to the mitochondrion matrix. Heterodimeric electron transfer flavoprotein that accepts electrons from several mitochondrial dehydrogenases, including acyl-CoA dehydrogenases, glutaryl-CoA and sarcosine dehydrogenase. It transfers the electrons to the main mitochondrial respiratory chain via ETF-ubiquinone oxidoreductase. Required for normal mitochondrial fatty acid oxidation and normal amino acid metabolism. ETFB binds an AMP molecule that probably has a purely structural role. The polypeptide is Electron transfer flavoprotein subunit beta (Sus scrofa (Pig)).